The sequence spans 1116 residues: Protein translocase subunit SecA (1116 aa).

ATP-binding positions include glutamine 176, 194 to 198 (GEGKT), and aspartate 693.

Belongs to the SecA family. As to quaternary structure, monomer and homodimer. Part of the essential Sec protein translocation apparatus which comprises SecA, SecYEG and auxiliary proteins SecDF. Other proteins may also be involved.

Its subcellular location is the cell inner membrane. The protein localises to the cytoplasm. The catalysed reaction is ATP + H2O + cellular proteinSide 1 = ADP + phosphate + cellular proteinSide 2.. Its function is as follows. Part of the Sec protein translocase complex. Interacts with the SecYEG preprotein conducting channel. Has a central role in coupling the hydrolysis of ATP to the transfer of proteins into and across the cell membrane, serving as an ATP-driven molecular motor driving the stepwise translocation of polypeptide chains across the membrane. The polypeptide is Protein translocase subunit SecA (Amoebophilus asiaticus (strain 5a2)).